The primary structure comprises 326 residues: Putative F-box protein At3g22710 (326 aa).

The F-box domain maps to 1 to 50 (MTMPDLPPDLVEEILSRVPATSVKKLRSTCTQWNAIFKDERFTEKHFSKA).

The chain is Putative F-box protein At3g22710 from Arabidopsis thaliana (Mouse-ear cress).